Reading from the N-terminus, the 195-residue chain is Imidazoleglycerol-phosphate dehydratase (195 aa).

The protein belongs to the imidazoleglycerol-phosphate dehydratase family.

It localises to the cytoplasm. It catalyses the reaction D-erythro-1-(imidazol-4-yl)glycerol 3-phosphate = 3-(imidazol-4-yl)-2-oxopropyl phosphate + H2O. The protein operates within amino-acid biosynthesis; L-histidine biosynthesis; L-histidine from 5-phospho-alpha-D-ribose 1-diphosphate: step 6/9. The protein is Imidazoleglycerol-phosphate dehydratase of Jannaschia sp. (strain CCS1).